The following is a 280-amino-acid chain: Cytochrome c1 (280 aa).

The first 21 residues, 1 to 21 (MKKLLISAVSALVLGSGAALA), serve as a signal peptide directing secretion. Residues C55, C58, H59, and M205 each coordinate heme c. A helical membrane pass occupies residues 249 to 267 (MGLVAVVMLGLLSVMLYLT).

The main subunits of complex b-c1 are: cytochrome b, cytochrome c1 and the Rieske protein. Binds 1 heme c group covalently per subunit.

It localises to the cell membrane. Functionally, component of the ubiquinol-cytochrome c reductase complex (complex III or cytochrome b-c1 complex), which is a respiratory chain that generates an electrochemical potential coupled to ATP synthesis. c1 functions as an electron donor to cytochrome c. The polypeptide is Cytochrome c1 (petC) (Rhodobacter capsulatus (Rhodopseudomonas capsulata)).